The following is an 813-amino-acid chain: UPF0508 protein KLLA0A06237g (813 aa).

The interval 478 to 537 (KKDKSKSQKNSTDSLAKLSDTKSIHPPESAMSSHASTPSSTSKSSKSSKSSSTLSPSTCK) is disordered. The span at 506 to 537 (SAMSSHASTPSSTSKSSKSSKSSSTLSPSTCK) shows a compositional bias: low complexity.

It belongs to the UPF0508 family.

This Kluyveromyces lactis (strain ATCC 8585 / CBS 2359 / DSM 70799 / NBRC 1267 / NRRL Y-1140 / WM37) (Yeast) protein is UPF0508 protein KLLA0A06237g.